The chain runs to 580 residues: Microcin-J25 export ATP-binding/permease protein McjD (580 aa).

6 helical membrane-spanning segments follow: residues 25-45 (FFSM…SPLI), 66-86 (VLLA…VFLF), 143-163 (VSQN…VVLS), 167-187 (WFSA…NTRL), 261-281 (AVIL…NGVV), and 286-306 (FIMI…IGAL). One can recognise an ABC transmembrane type-1 domain in the interval 25–312 (FFSMLFITSL…IGALLSEIRQ (288 aa)). The ABC transporter domain occupies 345–578 (LSIRELSFSY…NEYISGLASV (234 aa)). ATP is bound at residue 378-385 (GPSGSGKS).

The protein belongs to the ABC transporter superfamily. Homodimer.

It localises to the cell inner membrane. In terms of biological role, is able to protect a cell, which harbors the plasmid pTUC100 encoding microcin J25, against microcin J25. Is required for microcin J25 export out of the producing cells. This chain is Microcin-J25 export ATP-binding/permease protein McjD (mcjD), found in Escherichia coli.